The following is a 554-amino-acid chain: Rab GTPase-binding effector protein 2 (554 aa).

Disordered stretches follow at residues methionine 1 to serine 28, isoleucine 167 to alanine 208, and glycine 371 to leucine 395. The segment covering proline 14 to serine 28 has biased composition (basic and acidic residues). A coiled-coil region spans residues glutamine 15–glutamine 173. 4 positions are modified to phosphoserine: serine 176, serine 180, serine 187, and serine 191. Positions aspartate 274–valine 509 form a coiled coil.

This sequence belongs to the rabaptin family. As to quaternary structure, heterodimer with RABGEF1. The dimer binds RAB5A that has been activated by GTP-binding. Interacts with SDCCAG8; this interaction is important for ciliogenesis regulation. Interacts with RAB4A; this interaction may mediate VEGFR2 cell surface expression.

The protein localises to the cytoplasm. Its subcellular location is the early endosome. It is found in the cytoskeleton. It localises to the microtubule organizing center. The protein resides in the centrosome. The protein localises to the cilium basal body. In terms of biological role, plays a role in membrane trafficking and in homotypic early endosome fusion. Participates in arteriogenesis by regulating vascular endothelial growth factor receptor 2/VEGFR2 cell surface expression and endosomal trafficking. By interacting with SDCCAG8, localizes to centrosomes and plays a critical role in ciliogenesis. The chain is Rab GTPase-binding effector protein 2 (Rabep2) from Mus musculus (Mouse).